A 644-amino-acid polypeptide reads, in one-letter code: Exoribonuclease 2 (644 aa).

Residues 189–516 (RKDLTALDFV…NHRLLKAVIK (328 aa)) enclose the RNB domain. The region spanning 561–643 (DTRFAAEIVD…ETRSIIARPV (83 aa)) is the S1 motif domain.

Belongs to the RNR ribonuclease family. RNase II subfamily.

The protein localises to the cytoplasm. It carries out the reaction Exonucleolytic cleavage in the 3'- to 5'-direction to yield nucleoside 5'-phosphates.. Involved in mRNA degradation. Hydrolyzes single-stranded polyribonucleotides processively in the 3' to 5' direction. The protein is Exoribonuclease 2 of Escherichia coli O157:H7.